Consider the following 167-residue polypeptide: Ubiquitin-fold modifier-conjugating enzyme 1 (167 aa).

C116 functions as the Glycyl thioester intermediate in the catalytic mechanism. K122 is covalently cross-linked (Glycyl lysine isopeptide (Lys-Gly) (interchain with G-Cter in UFM1)).

It belongs to the ubiquitin-conjugating enzyme family. UFC1 subfamily. In terms of assembly, interacts with UBA5 (via C-terminus). Interacts with UFL1. Interacts with UFM1. Interacts with KIRREL3. In terms of processing, ufmylated at Lys-122. Deufmylated by UFSP1.

Functionally, E2-like enzyme which specifically catalyzes the second step in ufmylation. Accepts the ubiquitin-like modifier UFM1 from the E1 enzyme UBA5 and forms an intermediate with UFM1 via a thioester linkage. Ufmylation is involved in various processes, such as ribosome recycling, response to DNA damage, interferon response or reticulophagy (also called ER-phagy). The sequence is that of Ubiquitin-fold modifier-conjugating enzyme 1 from Homo sapiens (Human).